Here is a 366-residue protein sequence, read N- to C-terminus: MTYIYRDTKITTKSTIPFLIFFLFCFSNLSMATLKHKPVNLVFYVYNLIIIFSSHSSTAELRRLLQPSKTDGTVSFLVIGDWGRRGSYNQSQVALQMGEIGEKLDIDFVISTGDNFYDNGLTSLHDPLFQDSFTNIYTAPSLQKPWYSVLGNHDYRGDVRAQLSPMLRALDNRWVCMRSFIVNAEIVDLFFVDTTPFVDKYFIQPNKHVYDWSGVLPRQTYLNNLLKELDVALRESVAKWKIVIGHHTIKSAGHHGNTIELEKHLLPILQANEVDLYVNGHDHCLEHISSVDSNIQFMTSGGGSKAWKGGDVNYVEPEEMRFYYDGQGFMSVHVSEAELRVVFYDVFGHVLHHWKKTYKEALYFAS.

Positions 1–32 (MTYIYRDTKITTKSTIPFLIFFLFCFSNLSMA) are cleaved as a signal peptide. Residue Asp81 participates in Fe cation binding. Residue Asn89 is glycosylated (N-linked (GlcNAc...) asparagine). Residues Asp114 and Tyr117 each coordinate Fe cation. Asp114 is a Zn(2+) binding site. Zn(2+)-binding residues include Asn152 and His246. Residue His255 is the Proton donor of the active site. His281 provides a ligand contact to Zn(2+). Residue 281 to 283 (HDH) coordinates substrate. Residue His283 participates in Fe cation binding.

The protein belongs to the metallophosphoesterase superfamily. Purple acid phosphatase family. Homodimer. Fe cation is required as a cofactor. Requires Zn(2+) as cofactor. As to expression, expressed in stems, leaves, flowers and siliques.

The protein resides in the secreted. It carries out the reaction a phosphate monoester + H2O = an alcohol + phosphate. The sequence is that of Purple acid phosphatase 3 (PAP3) from Arabidopsis thaliana (Mouse-ear cress).